The following is a 281-amino-acid chain: Hexaprenyl pyrophosphate synthase (281 aa).

Residues Lys42, Arg45, and His74 each contribute to the isopentenyl diphosphate site. Residues Asp81 and Asp85 each contribute to the Mg(2+) site. Position 91 (Arg91) interacts with isopentenyl diphosphate.

The protein belongs to the FPP/GGPP synthase family. As to quaternary structure, homodimer. Requires Mg(2+) as cofactor.

The enzyme catalyses 2 isopentenyl diphosphate + (2E,6E,10E)-geranylgeranyl diphosphate = all-trans-hexaprenyl diphosphate + 2 diphosphate. Catalyzes consecutive E-type condensation of two isopentenyl pyrophosphate (IPP) molecules with an allylic substrate such as geranylgeranyl diphosphate (GGPP), farnesyl diphosphate (FPP) or geranyl diphosphate (GPP) to yield the medium-chain product trans-C30-hexaprenyl pyrophosphate (HexPP). GGPP is the physiological substrate. This is Hexaprenyl pyrophosphate synthase (gdS-2) from Saccharolobus solfataricus (strain ATCC 35092 / DSM 1617 / JCM 11322 / P2) (Sulfolobus solfataricus).